The primary structure comprises 317 residues: Melanocyte-stimulating hormone receptor (317 aa).

The Extracellular portion of the chain corresponds to Met1–Glu37. Residues Asn15 and Asn29 are each glycosylated (N-linked (GlcNAc...) asparagine). The chain crosses the membrane as a helical span at residues Val38–Ile63. The Cytoplasmic segment spans residues Ala64–Pro72. A helical membrane pass occupies residues Met73 to Leu93. Residues Glu94–Asp118 lie on the Extracellular side of the membrane. The helical transmembrane segment at Ile119 to Val140 threads the bilayer. Over Asp141–Arg163 the chain is Cytoplasmic. The chain crosses the membrane as a helical span at residues Ala164–Tyr183. Over Asp184–Cys191 the chain is Extracellular. A helical membrane pass occupies residues Leu192–Leu211. Over Ala212 to Ala240 the chain is Cytoplasmic. A helical transmembrane segment spans residues Ala241–Leu266. Topologically, residues Cys267–Asn279 are extracellular. Residues Phe280 to Phe300 traverse the membrane as a helical segment. The Cytoplasmic segment spans residues Arg301–Trp317. Cys315 carries the S-palmitoyl cysteine lipid modification.

The protein belongs to the G-protein coupled receptor 1 family. Interacts with MGRN1, but does not undergo MGRN1-mediated ubiquitination; this interaction competes with GNAS-binding and thus inhibits agonist-induced cAMP production. Interacts with OPN3; the interaction results in a decrease in MC1R-mediated cAMP signaling and ultimately a decrease in melanin production in melanocytes.

It is found in the cell membrane. Its function is as follows. Receptor for MSH (alpha, beta and gamma) and ACTH. The activity of this receptor is mediated by G proteins which activate adenylate cyclase. Mediates melanogenesis, the production of eumelanin (black/brown) and phaeomelanin (red/yellow), via regulation of cAMP signaling in melanocytes. The protein is Melanocyte-stimulating hormone receptor (MC1R) of Puma yagouaroundi (Jaguarundi).